A 393-amino-acid chain; its full sequence is uncharacterized protein (393 aa).

The segment at 6–47 (KYDNKCAIHKEHKIKMICATCKDVVCNECILLDHNGHKFGRI) adopts a B box-type zinc-finger fold. Zn(2+) is bound by residues C11, H14, C34, and H39.

This is an uncharacterized protein from Dictyostelium discoideum (Social amoeba).